The primary structure comprises 156 residues: Small ribosomal subunit protein uS7 (156 aa).

It belongs to the universal ribosomal protein uS7 family. As to quaternary structure, part of the 30S ribosomal subunit. Contacts proteins S9 and S11.

Functionally, one of the primary rRNA binding proteins, it binds directly to 16S rRNA where it nucleates assembly of the head domain of the 30S subunit. Is located at the subunit interface close to the decoding center, probably blocks exit of the E-site tRNA. The chain is Small ribosomal subunit protein uS7 from Shewanella frigidimarina (strain NCIMB 400).